A 157-amino-acid polypeptide reads, in one-letter code: Isotocin-neurophysin IT 1 (157 aa).

Residues 1-20 form the signal peptide; it reads MFGTSVSALCLLFLLSVCTA. A disulfide bridge links cysteine 21 with cysteine 26. Residue glycine 29 is modified to Glycine amide. 7 disulfides stabilise this stretch: cysteine 42/cysteine 86, cysteine 45/cysteine 59, cysteine 53/cysteine 76, cysteine 60/cysteine 66, cysteine 93/cysteine 106, cysteine 100/cysteine 118, and cysteine 107/cysteine 112.

This sequence belongs to the vasopressin/oxytocin family. In terms of processing, seven disulfide bonds are present in neurophysin.

It is found in the secreted. Its function is as follows. Isotocin causes contraction of smooth muscles. The protein is Isotocin-neurophysin IT 1 of Oncorhynchus keta (Chum salmon).